Here is a 729-residue protein sequence, read N- to C-terminus: E3 ubiquitin-protein ligase SH3RF2 (729 aa).

Residues 12-53 (CPVCFEKLDVTAKVLPCQHTFCKPCLQRVFKAHKELRCPECR) form an RING-type zinc finger. The segment at 78 to 105 (SGQSSGRGGSFRRPGTMTLQDGRKSRTN) is disordered. SH3 domains are found at residues 125 to 184 (DGVP…VIKQ) and 187 to 252 (QPPP…PNLT). The disordered stretch occupies residues 258–297 (EKNKGRQSSRTKNLSLVSSSSRGNTSTLRRGPGSRRKVPG). Positions 263–285 (RQSSRTKNLSLVSSSSRGNTSTL) are enriched in polar residues. The interaction with PAK4 stretch occupies residues 370–459 (VVSLPGSQQH…RSPGLYTTWT (90 aa)). The SH3 3 domain maps to 380–441 (LSANMFVALH…PNNYVIPIFR (62 aa)). Disordered regions lie at residues 497 to 526 (STAGPGTLGQGSLRKGRSSMRKNGSLQRPL) and 610 to 677 (KSEP…SQPE). Residues 517-526 (RKNGSLQRPL) show a composition bias toward polar residues. Positions 641 to 646 (KTVRFQ) are interaction with PPP1CA. S649 is subject to Phosphoserine.

Belongs to the SH3RF family. As to quaternary structure, interacts with FASLG and PPP1CA. Interacts with PAK4 and TNFRSF1A. Interacts with DLK1, MAP3K10/MLK2, MAPK8IP1/JIP1, MAPK8IP2/JIP2 and MAPK8IP3/JIP3. Interacts with RAC1 (both active GTP- or inactive GDP-bound forms). In terms of processing, autoubiquitinated. Heart (at protein level). Up-regulated in colon cancer tissues as compared to normal colon tissues (at protein level). Testis. In the heart, present in the apex, left atrium, right atrium, left ventricle and right ventricle, but not in the aorta.

The protein localises to the nucleus. The enzyme catalyses S-ubiquitinyl-[E2 ubiquitin-conjugating enzyme]-L-cysteine + [acceptor protein]-L-lysine = [E2 ubiquitin-conjugating enzyme]-L-cysteine + N(6)-ubiquitinyl-[acceptor protein]-L-lysine.. It participates in protein modification; protein ubiquitination. In terms of biological role, has E3 ubiquitin-protein ligase activity. Acts as an anti-apoptotic regulator of the JNK pathway by ubiquitinating and promoting the degradation of SH3RF1, a scaffold protein that is required for pro-apoptotic JNK activation. Facilitates TNF-alpha-mediated recruitment of adapter proteins TRADD and RIPK1 to TNFRSF1A and regulates PAK4 protein stability via inhibition of its ubiquitin-mediated proteasomal degradation. Inhibits PPP1CA phosphatase activity. In Homo sapiens (Human), this protein is E3 ubiquitin-protein ligase SH3RF2 (SH3RF2).